A 220-amino-acid polypeptide reads, in one-letter code: MKTGALATFLALCLPVTVFATTLRLSNEVDLLVLDGKKVSSSLLRGAESIELENGPHQLVFRVEKTIRLPGNEERLYISPPLVISFDTQLISQVNFQLPRLENEREASYFNAAPRLALLDGDAMPIPVKLDILAITSTAKVVDYEIETERYNKSAKRASLPQFATMMADDSTLLSDVSELDTVPPQSQTLTEQRLKYWFRLADPQTRHHFLQWAEKQPPS.

Residues 1–20 form the signal peptide; that stretch reads MKTGALATFLALCLPVTVFA.

The protein belongs to the UPF0319 family.

The sequence is that of UPF0319 protein YccT from Salmonella agona (strain SL483).